Consider the following 148-residue polypeptide: Hemoglobin subunit beta (148 aa).

The 146-residue stretch at 3–148 (XWTDXERHVI…AVAALGKQYH (146 aa)) folds into the Globin domain. Residues H64 and H93 each contribute to the heme b site.

Belongs to the globin family. In terms of assembly, heterotetramer of two alpha chains and two beta chains. As to expression, red blood cells.

Involved in oxygen transport from gills to the various peripheral tissues. This Silurus asotus (Amur catfish) protein is Hemoglobin subunit beta (hbb).